The following is a 524-amino-acid chain: Mitochondrial-processing peptidase subunit alpha (524 aa).

The transit peptide at 1-32 (MATAVWAAARLLRGSAALCARPKFGSPAHRRF) directs the protein to the mitochondrion. N6-succinyllysine is present on K63.

It belongs to the peptidase M16 family. As to quaternary structure, heterodimer of PMPCA (alpha) and PMPCB (beta) subunits, forming the mitochondrial processing protease (MPP) in which PMPCA is involved in substrate recognition and binding and PMPCB is the catalytic subunit.

It is found in the mitochondrion matrix. It localises to the mitochondrion inner membrane. In terms of biological role, substrate recognition and binding subunit of the essential mitochondrial processing protease (MPP), which cleaves the mitochondrial sequence off newly imported precursors proteins. The polypeptide is Mitochondrial-processing peptidase subunit alpha (Pmpca) (Rattus norvegicus (Rat)).